We begin with the raw amino-acid sequence, 109 residues long: Nucleoid-associated protein CGSHiEE_00780 (109 aa).

It belongs to the YbaB/EbfC family. As to quaternary structure, homodimer.

It is found in the cytoplasm. It localises to the nucleoid. In terms of biological role, binds to DNA and alters its conformation. May be involved in regulation of gene expression, nucleoid organization and DNA protection. This Haemophilus influenzae (strain PittEE) protein is Nucleoid-associated protein CGSHiEE_00780.